A 241-amino-acid polypeptide reads, in one-letter code: MPKLELLPAVDVRDGQAVRLVHGESGSETSYGSPLEAALAWQSAGAEWLHLVDLDAAFGTGDNRALIAEVAGAMDIKVELSGGIRDDASLAAALATGCRRVNLGTAALETPEWVAKVIAEHGDKIAVGLDVRGTTLRGRGWTRDGGDLYETLARLDSEGCARYVVTDIAKDGTLEGPNLGLLRDVCAATDRPVVASGGVSSLDDLRAISLLVPEGVEGAIVGKALYAKAFTLEEALKAVAA.

The active-site Proton acceptor is the D11. The active-site Proton donor is the D130.

This sequence belongs to the HisA/HisF family.

Its subcellular location is the cytoplasm. It carries out the reaction 1-(5-phospho-beta-D-ribosyl)-5-[(5-phospho-beta-D-ribosylamino)methylideneamino]imidazole-4-carboxamide = 5-[(5-phospho-1-deoxy-D-ribulos-1-ylimino)methylamino]-1-(5-phospho-beta-D-ribosyl)imidazole-4-carboxamide. The enzyme catalyses N-(5-phospho-beta-D-ribosyl)anthranilate = 1-(2-carboxyphenylamino)-1-deoxy-D-ribulose 5-phosphate. It functions in the pathway amino-acid biosynthesis; L-histidine biosynthesis; L-histidine from 5-phospho-alpha-D-ribose 1-diphosphate: step 4/9. The protein operates within amino-acid biosynthesis; L-tryptophan biosynthesis; L-tryptophan from chorismate: step 3/5. Functionally, involved in both the histidine and tryptophan biosynthetic pathways. This is Phosphoribosyl isomerase A from Streptomyces griseus subsp. griseus (strain JCM 4626 / CBS 651.72 / NBRC 13350 / KCC S-0626 / ISP 5235).